The chain runs to 154 residues: Prefoldin subunit 2 (154 aa).

Basic and acidic residues predominate over residues 124 to 139; it reads IRLMGEDEKPAAKENS. The tract at residues 124-154 is disordered; sequence IRLMGEDEKPAAKENSEGAGAKASSAGVLVS. Low complexity predominate over residues 140–154; sequence EGAGAKASSAGVLVS.

This sequence belongs to the prefoldin subunit beta family. Heterohexamer of two PFD-alpha type and four PFD-beta type subunits. Component of the PAQosome complex which is responsible for the biogenesis of several protein complexes and which consists of R2TP complex members RUVBL1, RUVBL2, RPAP3 and PIH1D1, URI complex members PFDN2, PFDN6, PDRG1, UXT and URI1 as well as ASDURF, POLR2E and DNAAF10/WDR92. Interacts with URI1; the interaction is phosphorylation-dependent and occurs in a growth-dependent manner.

The protein localises to the nucleus. It localises to the cytoplasm. The protein resides in the mitochondrion. Binds specifically to cytosolic chaperonin (c-CPN) and transfers target proteins to it. Binds to nascent polypeptide chain and promotes folding in an environment in which there are many competing pathways for nonnative proteins. The protein is Prefoldin subunit 2 (PFDN2) of Homo sapiens (Human).